A 226-amino-acid polypeptide reads, in one-letter code: ATP-dependent dethiobiotin synthetase BioD (226 aa).

14–19 is a binding site for ATP; it reads GIGKTF. T18 contacts Mg(2+). K39 is a catalytic residue. S43 is a binding site for substrate. ATP is bound by residues D56, 117–120, 177–178, 206–208, and N213; these read EGVG, NT, and PHI. 2 residues coordinate Mg(2+): D56 and E117.

The protein belongs to the dethiobiotin synthetase family. In terms of assembly, homodimer. It depends on Mg(2+) as a cofactor.

Its subcellular location is the cytoplasm. It catalyses the reaction (7R,8S)-7,8-diammoniononanoate + CO2 + ATP = (4R,5S)-dethiobiotin + ADP + phosphate + 3 H(+). It functions in the pathway cofactor biosynthesis; biotin biosynthesis; biotin from 7,8-diaminononanoate: step 1/2. Its function is as follows. Catalyzes a mechanistically unusual reaction, the ATP-dependent insertion of CO2 between the N7 and N8 nitrogen atoms of 7,8-diaminopelargonic acid (DAPA, also called 7,8-diammoniononanoate) to form a ureido ring. This chain is ATP-dependent dethiobiotin synthetase BioD, found in Xylella fastidiosa (strain Temecula1 / ATCC 700964).